A 388-amino-acid chain; its full sequence is Succinyl-diaminopimelate desuccinylase (388 aa).

Position 84 (histidine 84) interacts with Zn(2+). Aspartate 86 is an active-site residue. Aspartate 115 is a binding site for Zn(2+). The active-site Proton acceptor is the glutamate 146. Glutamate 147, glutamate 175, and histidine 360 together coordinate Zn(2+).

It belongs to the peptidase M20A family. DapE subfamily. Homodimer. Requires Zn(2+) as cofactor. It depends on Co(2+) as a cofactor.

It carries out the reaction N-succinyl-(2S,6S)-2,6-diaminopimelate + H2O = (2S,6S)-2,6-diaminopimelate + succinate. Its pathway is amino-acid biosynthesis; L-lysine biosynthesis via DAP pathway; LL-2,6-diaminopimelate from (S)-tetrahydrodipicolinate (succinylase route): step 3/3. Functionally, catalyzes the hydrolysis of N-succinyl-L,L-diaminopimelic acid (SDAP), forming succinate and LL-2,6-diaminopimelate (DAP), an intermediate involved in the bacterial biosynthesis of lysine and meso-diaminopimelic acid, an essential component of bacterial cell walls. In Helicobacter pylori (strain G27), this protein is Succinyl-diaminopimelate desuccinylase.